Here is a 323-residue protein sequence, read N- to C-terminus: Pantothenate kinase (323 aa).

101–108 (GSVAVGKS) serves as a coordination point for ATP.

This sequence belongs to the prokaryotic pantothenate kinase family.

It localises to the cytoplasm. The catalysed reaction is (R)-pantothenate + ATP = (R)-4'-phosphopantothenate + ADP + H(+). It participates in cofactor biosynthesis; coenzyme A biosynthesis; CoA from (R)-pantothenate: step 1/5. This chain is Pantothenate kinase, found in Paenarthrobacter aurescens (strain TC1).